The following is a 291-amino-acid chain: MSWFESLVLGLVQGLTEFLPVSSSAHLRLTAAFSGWHDPGAAFTAITQIGTEAAVLIYFRKDIGRIIAAWTRSLTDKSMRHDPDARMGWLVIVGSIPIGVLGLTLKDQIEGPFRDLRITATMLIVVGVIIGIADRMAARDEKGGRHRAPQQRKELENLGVRDGLIYGLCQAAALIPGVSRSGATISGGLFMGYRREAAARYSFLLAIPAVLASGVFELKDAMESDHVSWGPTLFATVIAFATGYVVIAWFMKFISTKSFMPFVWYRIALGIVIIVLVSVGVLSPHAAESGG.

Helical transmembrane passes span 39–59 (PGAAFTAITQIGTEAAVLIYF), 85–105 (ARMGWLVIVGSIPIGVLGLTL), 118–138 (ITATMLIVVGVIIGIADRMAA), 198–218 (AARYSFLLAIPAVLASGVFEL), 231–251 (PTLFATVIAFATGYVVIAWFM), and 262–282 (FVWYRIALGIVIIVLVSVGVL).

It belongs to the UppP family.

It localises to the cell membrane. The catalysed reaction is di-trans,octa-cis-undecaprenyl diphosphate + H2O = di-trans,octa-cis-undecaprenyl phosphate + phosphate + H(+). Catalyzes the dephosphorylation of undecaprenyl diphosphate (UPP). Confers resistance to bacitracin. The protein is Undecaprenyl-diphosphatase 2 of Streptomyces coelicolor (strain ATCC BAA-471 / A3(2) / M145).